The sequence spans 118 residues: UPF0102 protein PC1_0307 (118 aa).

It belongs to the UPF0102 family.

This Pectobacterium carotovorum subsp. carotovorum (strain PC1) protein is UPF0102 protein PC1_0307.